A 502-amino-acid chain; its full sequence is ATP synthase subunit alpha (502 aa).

Residue 169 to 176 participates in ATP binding; the sequence is GDRQTGKT.

The protein belongs to the ATPase alpha/beta chains family. As to quaternary structure, F-type ATPases have 2 components, CF(1) - the catalytic core - and CF(0) - the membrane proton channel. CF(1) has five subunits: alpha(3), beta(3), gamma(1), delta(1), epsilon(1). CF(0) has three main subunits: a(1), b(2) and c(9-12). The alpha and beta chains form an alternating ring which encloses part of the gamma chain. CF(1) is attached to CF(0) by a central stalk formed by the gamma and epsilon chains, while a peripheral stalk is formed by the delta and b chains.

Its subcellular location is the cell inner membrane. The catalysed reaction is ATP + H2O + 4 H(+)(in) = ADP + phosphate + 5 H(+)(out). Produces ATP from ADP in the presence of a proton gradient across the membrane. The alpha chain is a regulatory subunit. The polypeptide is ATP synthase subunit alpha (Citrifermentans bemidjiense (strain ATCC BAA-1014 / DSM 16622 / JCM 12645 / Bem) (Geobacter bemidjiensis)).